We begin with the raw amino-acid sequence, 571 residues long: Proline--tRNA ligase (571 aa).

It belongs to the class-II aminoacyl-tRNA synthetase family. ProS type 1 subfamily. In terms of assembly, homodimer.

The protein resides in the cytoplasm. It catalyses the reaction tRNA(Pro) + L-proline + ATP = L-prolyl-tRNA(Pro) + AMP + diphosphate. Its function is as follows. Catalyzes the attachment of proline to tRNA(Pro) in a two-step reaction: proline is first activated by ATP to form Pro-AMP and then transferred to the acceptor end of tRNA(Pro). As ProRS can inadvertently accommodate and process non-cognate amino acids such as alanine and cysteine, to avoid such errors it has two additional distinct editing activities against alanine. One activity is designated as 'pretransfer' editing and involves the tRNA(Pro)-independent hydrolysis of activated Ala-AMP. The other activity is designated 'posttransfer' editing and involves deacylation of mischarged Ala-tRNA(Pro). The misacylated Cys-tRNA(Pro) is not edited by ProRS. In Vibrio vulnificus (strain YJ016), this protein is Proline--tRNA ligase.